The following is a 336-amino-acid chain: tRNA N6-adenosine threonylcarbamoyltransferase (336 aa).

2 residues coordinate Fe cation: His108 and His112. Substrate-binding positions include 129 to 133, Asp161, Glu178, and Ser258; that span reads LISGG. Asp286 contributes to the Fe cation binding site.

This sequence belongs to the KAE1 / TsaD family. Fe(2+) is required as a cofactor.

It is found in the cytoplasm. It catalyses the reaction L-threonylcarbamoyladenylate + adenosine(37) in tRNA = N(6)-L-threonylcarbamoyladenosine(37) in tRNA + AMP + H(+). Its function is as follows. Required for the formation of a threonylcarbamoyl group on adenosine at position 37 (t(6)A37) in tRNAs that read codons beginning with adenine. Is probably involved in the transfer of the threonylcarbamoyl moiety of threonylcarbamoyl-AMP (TC-AMP) to the N6 group of A37. The chain is tRNA N6-adenosine threonylcarbamoyltransferase from Pyrobaculum neutrophilum (strain DSM 2338 / JCM 9278 / NBRC 100436 / V24Sta) (Thermoproteus neutrophilus).